We begin with the raw amino-acid sequence, 420 residues long: MDKFRVQGPTRLAGEVTISGAKNAALPILFAALLAEEPVEIQNVPKLRDIDTTMKLLGQLGARVERNGSVHVDASDVNVFCAPYDLVKTMRASIWALGPLVARFGQGQVSLPGGCAIGARPVDLHIYGLEQLGAQIVLEEGYVKATVDGRLKGAHIVMDKVSVGATVTIMSAATLAEGTTIIENAAREPEIVDTANFLNTLGAKISGAGSDKITIEGVARLGGGVYRVVPDRIETGTFLVAAAVSRGQIICRNTRPDTLDAVLAKLREAGADIEVGEDWISLDMHGKRPKAVTFRTSPHPGFPTDMQAQFSLLNLVAEGTGVITETIFENRFMHVPELIRMGAQAEIESNTVICHGVDKLSGAQVMATDLRASASLVLAGCIAEGVTTVDRIYHIDRGYDRIEDKLRALGANIERVKEHE.

Phosphoenolpyruvate is bound at residue 22–23 (KN). Arg91 is a UDP-N-acetyl-alpha-D-glucosamine binding site. Catalysis depends on Cys115, which acts as the Proton donor. At Cys115 the chain carries 2-(S-cysteinyl)pyruvic acid O-phosphothioketal. UDP-N-acetyl-alpha-D-glucosamine-binding positions include 120–124 (RPVDL), 160–163 (KVSV), Asp305, and Ile327.

The protein belongs to the EPSP synthase family. MurA subfamily.

The protein resides in the cytoplasm. The catalysed reaction is phosphoenolpyruvate + UDP-N-acetyl-alpha-D-glucosamine = UDP-N-acetyl-3-O-(1-carboxyvinyl)-alpha-D-glucosamine + phosphate. It functions in the pathway cell wall biogenesis; peptidoglycan biosynthesis. In terms of biological role, cell wall formation. Adds enolpyruvyl to UDP-N-acetylglucosamine. In Pectobacterium atrosepticum (strain SCRI 1043 / ATCC BAA-672) (Erwinia carotovora subsp. atroseptica), this protein is UDP-N-acetylglucosamine 1-carboxyvinyltransferase.